Consider the following 435-residue polypeptide: D-amino acid dehydrogenase (435 aa).

An FAD-binding site is contributed by 3-17 (VIVLGGGVLGVSTAW).

This sequence belongs to the DadA oxidoreductase family. The cofactor is FAD.

The enzyme catalyses a D-alpha-amino acid + A + H2O = a 2-oxocarboxylate + AH2 + NH4(+). It functions in the pathway amino-acid degradation; D-alanine degradation; NH(3) and pyruvate from D-alanine: step 1/1. Functionally, oxidative deamination of D-amino acids. The protein is D-amino acid dehydrogenase of Chromobacterium violaceum (strain ATCC 12472 / DSM 30191 / JCM 1249 / CCUG 213 / NBRC 12614 / NCIMB 9131 / NCTC 9757 / MK).